Reading from the N-terminus, the 238-residue chain is tRNA1(Val) (adenine(37)-N6)-methyltransferase (238 aa).

The protein belongs to the methyltransferase superfamily. tRNA (adenine-N(6)-)-methyltransferase family.

Its subcellular location is the cytoplasm. It carries out the reaction adenosine(37) in tRNA1(Val) + S-adenosyl-L-methionine = N(6)-methyladenosine(37) in tRNA1(Val) + S-adenosyl-L-homocysteine + H(+). Functionally, specifically methylates the adenine in position 37 of tRNA(1)(Val) (anticodon cmo5UAC). This chain is tRNA1(Val) (adenine(37)-N6)-methyltransferase, found in Shewanella baltica (strain OS223).